Reading from the N-terminus, the 1072-residue chain is DNA-directed RNA polymerase subunit beta (1072 aa).

Belongs to the RNA polymerase beta chain family. As to quaternary structure, in plastids the minimal PEP RNA polymerase catalytic core is composed of four subunits: alpha, beta, beta', and beta''. When a (nuclear-encoded) sigma factor is associated with the core the holoenzyme is formed, which can initiate transcription.

The protein resides in the plastid. The protein localises to the chloroplast. The enzyme catalyses RNA(n) + a ribonucleoside 5'-triphosphate = RNA(n+1) + diphosphate. DNA-dependent RNA polymerase catalyzes the transcription of DNA into RNA using the four ribonucleoside triphosphates as substrates. This is DNA-directed RNA polymerase subunit beta from Oenothera elata subsp. hookeri (Hooker's evening primrose).